A 511-amino-acid polypeptide reads, in one-letter code: Transcription factor bHLH28 (511 aa).

A bHLH domain is found at 339 to 388 (DKPLNHVEAERMRREKLNHRFYALRAVVPNVSKMDKTSLLEDAVCYINEL).

In terms of assembly, homodimer.

Its subcellular location is the nucleus. This Arabidopsis thaliana (Mouse-ear cress) protein is Transcription factor bHLH28 (BHLH28).